Here is a 298-residue protein sequence, read N- to C-terminus: MSSPDNSSPSLRIPPWLRVKLPCSHTFADTRALVEGLGLNTVCNSAKCPNMFECFSSGTATFLILGNVCTRNCAFCNITPGHVSPPDPDEPRRVAEAAARLALRHVVVTSVTRDDLDDGGAAHFAATITRLRAALPAATVEVLIPDFRGDHAALRTVMAAAPHIVNHNVETPPAHYARIRPQADYRQSLELLRRVKAAGGVAKSGLMVGLGENDTEVEGVLADLADCGCDIVTIGQYMRPSRQHPPVERYVHPDTFESFAACGRGMGIPFVFSAPLVRSSYNAESAYNALCTLRTEPA.

Positions 43, 48, 54, 69, 73, 76, and 280 each coordinate [4Fe-4S] cluster. The Radical SAM core domain occupies 55 to 269 (FSSGTATFLI…AACGRGMGIP (215 aa)).

This sequence belongs to the radical SAM superfamily. Lipoyl synthase family. [4Fe-4S] cluster serves as cofactor.

Its subcellular location is the cytoplasm. It catalyses the reaction [[Fe-S] cluster scaffold protein carrying a second [4Fe-4S](2+) cluster] + N(6)-octanoyl-L-lysyl-[protein] + 2 oxidized [2Fe-2S]-[ferredoxin] + 2 S-adenosyl-L-methionine + 4 H(+) = [[Fe-S] cluster scaffold protein] + N(6)-[(R)-dihydrolipoyl]-L-lysyl-[protein] + 4 Fe(3+) + 2 hydrogen sulfide + 2 5'-deoxyadenosine + 2 L-methionine + 2 reduced [2Fe-2S]-[ferredoxin]. It functions in the pathway protein modification; protein lipoylation via endogenous pathway; protein N(6)-(lipoyl)lysine from octanoyl-[acyl-carrier-protein]: step 2/2. Functionally, catalyzes the radical-mediated insertion of two sulfur atoms into the C-6 and C-8 positions of the octanoyl moiety bound to the lipoyl domains of lipoate-dependent enzymes, thereby converting the octanoylated domains into lipoylated derivatives. In Nitratidesulfovibrio vulgaris (strain ATCC 29579 / DSM 644 / CCUG 34227 / NCIMB 8303 / VKM B-1760 / Hildenborough) (Desulfovibrio vulgaris), this protein is Lipoyl synthase.